A 585-amino-acid polypeptide reads, in one-letter code: 4-hydroxy-3-methylbut-2-en-1-yl diphosphate synthase (flavodoxin) (585 aa).

Residues cysteine 492, cysteine 495, cysteine 526, and glutamate 533 each contribute to the [4Fe-4S] cluster site.

The protein belongs to the IspG family. [4Fe-4S] cluster serves as cofactor.

The catalysed reaction is (2E)-4-hydroxy-3-methylbut-2-enyl diphosphate + oxidized [flavodoxin] + H2O + 2 H(+) = 2-C-methyl-D-erythritol 2,4-cyclic diphosphate + reduced [flavodoxin]. The protein operates within isoprenoid biosynthesis; isopentenyl diphosphate biosynthesis via DXP pathway; isopentenyl diphosphate from 1-deoxy-D-xylulose 5-phosphate: step 5/6. In terms of biological role, converts 2C-methyl-D-erythritol 2,4-cyclodiphosphate (ME-2,4cPP) into 1-hydroxy-2-methyl-2-(E)-butenyl 4-diphosphate. The polypeptide is 4-hydroxy-3-methylbut-2-en-1-yl diphosphate synthase (flavodoxin) (Akkermansia muciniphila (strain ATCC BAA-835 / DSM 22959 / JCM 33894 / BCRC 81048 / CCUG 64013 / CIP 107961 / Muc)).